Consider the following 85-residue polypeptide: UPF0386 protein MXAN_1729 (85 aa).

The protein belongs to the UPF0386 family.

The protein is UPF0386 protein MXAN_1729 of Myxococcus xanthus (strain DK1622).